We begin with the raw amino-acid sequence, 326 residues long: NADH-ubiquinone oxidoreductase chain 1 (326 aa).

A run of 9 helical transmembrane segments spans residues 1-21 (MFLL…LVAV), 41-61 (PNIV…KLFV), 72-92 (IIIF…SWCV), 104-124 (INIG…GIIT), 152-172 (IGLI…TEIV), 177-197 (SIWF…SILA), 234-256 (YANM…LPPF), 268-288 (VWFG…RSSF), and 303-323 (ILLP…LSFN).

This sequence belongs to the complex I subunit 1 family.

Its subcellular location is the mitochondrion inner membrane. It catalyses the reaction a ubiquinone + NADH + 5 H(+)(in) = a ubiquinol + NAD(+) + 4 H(+)(out). Core subunit of the mitochondrial membrane respiratory chain NADH dehydrogenase (Complex I) that is believed to belong to the minimal assembly required for catalysis. Complex I functions in the transfer of electrons from NADH to the respiratory chain. The immediate electron acceptor for the enzyme is believed to be ubiquinone. The protein is NADH-ubiquinone oxidoreductase chain 1 (ND1) of Chondrus crispus (Carrageen Irish moss).